The primary structure comprises 160 residues: Phosphopantetheine adenylyltransferase (160 aa).

T9 contributes to the substrate binding site. ATP contacts are provided by residues 9–10 (TF) and H17. Residues K41, L73, and R87 each contribute to the substrate site. ATP-binding positions include 88-90 (GLR), E98, and 123-129 (YSFLSSS).

This sequence belongs to the bacterial CoaD family. As to quaternary structure, homohexamer. Mg(2+) is required as a cofactor.

Its subcellular location is the cytoplasm. It carries out the reaction (R)-4'-phosphopantetheine + ATP + H(+) = 3'-dephospho-CoA + diphosphate. It participates in cofactor biosynthesis; coenzyme A biosynthesis; CoA from (R)-pantothenate: step 4/5. Its function is as follows. Reversibly transfers an adenylyl group from ATP to 4'-phosphopantetheine, yielding dephospho-CoA (dPCoA) and pyrophosphate. This is Phosphopantetheine adenylyltransferase from Moorella thermoacetica (strain ATCC 39073 / JCM 9320).